Reading from the N-terminus, the 828-residue chain is Periplasmic nitrate reductase (828 aa).

A signal peptide (tat-type signal) is located at residues 1-31; it reads MKLSRRSFMKANAVAAAAAAAGLSVPGVARA. The 4Fe-4S Mo/W bis-MGD-type domain occupies 39 to 95; it reads IKWDKAPCRFCGTGCGVLVGTQQGRVVACQGDPDAPVNRGLNCIKGYFLPKIMYGKD. [4Fe-4S] cluster is bound by residues C46, C49, C53, and C81. Mo-bis(molybdopterin guanine dinucleotide) is bound by residues K83, Q150, N175, C179, 212–219, 243–247, 262–264, M372, Q376, N482, 508–509, K531, D558, and 718–727; these read WGSNMAEM, STFQH, QSD, SD, and TGRVLEHWHT. A substrate-binding site is contributed by F794. Residues N802 and K819 each coordinate Mo-bis(molybdopterin guanine dinucleotide).

Belongs to the prokaryotic molybdopterin-containing oxidoreductase family. NasA/NapA/NarB subfamily. Component of the periplasmic nitrate reductase NapAB complex composed of NapA and NapB. The cofactor is [4Fe-4S] cluster. Mo-bis(molybdopterin guanine dinucleotide) serves as cofactor. In terms of processing, predicted to be exported by the Tat system. The position of the signal peptide cleavage has not been experimentally proven.

It is found in the periplasm. The enzyme catalyses 2 Fe(II)-[cytochrome] + nitrate + 2 H(+) = 2 Fe(III)-[cytochrome] + nitrite + H2O. Its function is as follows. Catalytic subunit of the periplasmic nitrate reductase complex NapAB. Receives electrons from NapB and catalyzes the reduction of nitrate to nitrite. In Salmonella paratyphi C (strain RKS4594), this protein is Periplasmic nitrate reductase.